We begin with the raw amino-acid sequence, 694 residues long: Potassium-transporting ATPase ATP-binding subunit (694 aa).

The next 4 membrane-spanning stretches (helical) occupy residues 36-56 (VMFV…RDLI), 62-82 (LAFS…ANFA), 218-238 (IALN…TATI), and 249-269 (IPII…IGAL). D306 (4-aspartylphosphate intermediate) is an active-site residue. ATP is bound by residues D343, E347, 376–383 (FTAQTRMS), and K394. Residues D530 and D534 each contribute to the Mg(2+) site. Transmembrane regions (helical) follow at residues 600-620 (FAII…LNVM), 628-648 (AILS…PLSL), and 666-686 (LVIY…LIDL).

It belongs to the cation transport ATPase (P-type) (TC 3.A.3) family. Type IA subfamily. The system is composed of three essential subunits: KdpA, KdpB and KdpC.

Its subcellular location is the cell inner membrane. The enzyme catalyses K(+)(out) + ATP + H2O = K(+)(in) + ADP + phosphate + H(+). Functionally, part of the high-affinity ATP-driven potassium transport (or Kdp) system, which catalyzes the hydrolysis of ATP coupled with the electrogenic transport of potassium into the cytoplasm. This subunit is responsible for energy coupling to the transport system and for the release of the potassium ions to the cytoplasm. This Agrobacterium fabrum (strain C58 / ATCC 33970) (Agrobacterium tumefaciens (strain C58)) protein is Potassium-transporting ATPase ATP-binding subunit.